Reading from the N-terminus, the 490-residue chain is Nicotinate phosphoribosyltransferase (490 aa).

The residue at position 206 (histidine 206) is a Phosphohistidine.

This sequence belongs to the NAPRTase family. Post-translationally, transiently phosphorylated on a His residue during the reaction cycle. Phosphorylation strongly increases the affinity for substrates and increases the rate of nicotinate D-ribonucleotide production. Dephosphorylation regenerates the low-affinity form of the enzyme, leading to product release.

It carries out the reaction nicotinate + 5-phospho-alpha-D-ribose 1-diphosphate + ATP + H2O = nicotinate beta-D-ribonucleotide + ADP + phosphate + diphosphate. The protein operates within cofactor biosynthesis; NAD(+) biosynthesis; nicotinate D-ribonucleotide from nicotinate: step 1/1. Catalyzes the synthesis of beta-nicotinate D-ribonucleotide from nicotinate and 5-phospho-D-ribose 1-phosphate at the expense of ATP. The protein is Nicotinate phosphoribosyltransferase (pncB) of Bacillus subtilis (strain 168).